We begin with the raw amino-acid sequence, 52 residues long: Conotoxin-like peptide 2 (52 aa).

An N-terminal signal peptide occupies residues 1–18 (MKFSTILLLVCPTVALSA). 3 cysteine pairs are disulfide-bonded: C24–C38, C31–C42, and C37–C49.

It is found in the secreted. This Orgyia pseudotsugata (Douglas-fir tussock moth) protein is Conotoxin-like peptide 2 (CTL-2).